Here is a 513-residue protein sequence, read N- to C-terminus: MDFSSLVASQLNAGVIWPEGILIITLMVILIGDLIVGRSARSWLPYVAIAGLLAAVVALYFTWDNPKPVAFLGAFEGDNLSIVFRAIIALSTASTVLMSIRYVEQAGTSLAEFLAIMLTATLGGMFLSGASELVMIFISLEMLSISSYLMTGYMKRDPRSNEAALKYLLIGASSSAIFLYGVSLLYGLSGGETSLSAIAQKLTDVNGGQSLALAIALVFVIAGIAFKISAVPFHQWTPDVYEGSPTPVVAFLSVGSKAAGFALAIRLLVTVFGLVSEQWRFIFIALAILSMILGNVVALAQTSMKRMLAYSSIGQAGFVMIGLTAGTDAGYSSMIFYLLIYLFMNLGAFACVILFALRTGTDQIAEYSGLYQKDPLLTLCLSICLLSLGGIPPLAGFFGKIYLFWAGWQAGLYALVLVGLVTSVASIYYYIRVVKMMVVKEPQEMSDAVKNYPVINWTLTGMRPLQVGIVLSLVATSLAGILSNPLFTLATDSVTTTPILQSAALATHISRAN.

Transmembrane regions (helical) follow at residues Val15–Ile35, Trp43–Trp63, Leu80–Ile100, Leu110–Ala130, Leu133–Tyr153, Leu168–Leu188, Leu211–Val231, Pro245–Ile265, Phe281–Gln301, Met307–Thr327, Ile335–Phe355, Leu379–Gly399, Ile401–Val421, and Val467–Phe487.

This sequence belongs to the complex I subunit 2 family. NDH-1 can be composed of about 15 different subunits; different subcomplexes with different compositions have been identified which probably have different functions.

It is found in the cellular thylakoid membrane. It carries out the reaction a plastoquinone + NADH + (n+1) H(+)(in) = a plastoquinol + NAD(+) + n H(+)(out). It catalyses the reaction a plastoquinone + NADPH + (n+1) H(+)(in) = a plastoquinol + NADP(+) + n H(+)(out). Functionally, NDH-1 shuttles electrons from an unknown electron donor, via FMN and iron-sulfur (Fe-S) centers, to quinones in the respiratory and/or the photosynthetic chain. The immediate electron acceptor for the enzyme in this species is believed to be plastoquinone. Couples the redox reaction to proton translocation, and thus conserves the redox energy in a proton gradient. Cyanobacterial NDH-1 also plays a role in inorganic carbon-concentration. This is NAD(P)H-quinone oxidoreductase subunit 2 from Microcystis aeruginosa (strain NIES-843 / IAM M-2473).